The chain runs to 548 residues: Phosphoglucomutase (548 aa).

Serine 135 acts as the Phosphoserine intermediate in catalysis. Mg(2+) is bound by residues serine 135, aspartate 288, aspartate 290, and aspartate 292.

The protein belongs to the phosphohexose mutase family. Mg(2+) serves as cofactor.

The catalysed reaction is alpha-D-glucose 1-phosphate = alpha-D-glucose 6-phosphate. It participates in glycolipid metabolism; diglucosyl-diacylglycerol biosynthesis. Its function is as follows. Catalyzes the interconversion between glucose-6-phosphate and alpha-glucose-1-phosphate. This is the first step in the biosynthesis of diglucosyl-diacylglycerol (Glc2-DAG), i.e. a glycolipid found in the membrane, which is also used as a membrane anchor for lipoteichoic acid (LTA). The polypeptide is Phosphoglucomutase (pgcA) (Staphylococcus haemolyticus (strain JCSC1435)).